Consider the following 200-residue polypeptide: 3-isopropylmalate dehydratase small subunit (200 aa).

It belongs to the LeuD family. LeuD type 1 subfamily. As to quaternary structure, heterodimer of LeuC and LeuD.

The catalysed reaction is (2R,3S)-3-isopropylmalate = (2S)-2-isopropylmalate. The protein operates within amino-acid biosynthesis; L-leucine biosynthesis; L-leucine from 3-methyl-2-oxobutanoate: step 2/4. Functionally, catalyzes the isomerization between 2-isopropylmalate and 3-isopropylmalate, via the formation of 2-isopropylmaleate. This Erythrobacter litoralis (strain HTCC2594) protein is 3-isopropylmalate dehydratase small subunit.